We begin with the raw amino-acid sequence, 652 residues long: Starch synthase 1, chloroplastic/amyloplastic (652 aa).

A chloroplast-targeting transit peptide spans 1 to 49 (MASLQISGSVKFEPFVGFNRIRHFRPIASLGFPRFRRRFSIGRSLLLRR). K156 is a binding site for ADP-alpha-D-glucose.

Belongs to the glycosyltransferase 1 family. Bacterial/plant glycogen synthase subfamily. In terms of tissue distribution, expressed in roots, leaves, stems, buds and flowers.

The protein resides in the plastid. It is found in the chloroplast. It localises to the amyloplast. It catalyses the reaction [(1-&gt;4)-alpha-D-glucosyl](n) + ADP-alpha-D-glucose = [(1-&gt;4)-alpha-D-glucosyl](n+1) + ADP + H(+). Its pathway is glycan biosynthesis; starch biosynthesis. Involved in the synthesis of short glycan chains within amylopectin in leaves. Is required to generate chains up to about a degree of polymerization of 10 (DP10). This Arabidopsis thaliana (Mouse-ear cress) protein is Starch synthase 1, chloroplastic/amyloplastic (SS1).